The following is a 589-amino-acid chain: SLKQSQESSEYEIAYRSTIQPRTAVRTQSRQSGAYSTGAVSGGGGRVLKMVTEMGSASIGGISPALSANAAKSFLEATDKEKKEMQGLNDRLGNYIDRVKKLEEQNRKLVADLDELRGRWGKDTSEIKIQYSDSLRDARKEIDDGARRKAEIDVKVARLRDDLAELRNRYEDVQHRRESDREKINQWQHAIEDAQSELEMLRARWRQLTEEEKRLNGDNARIWEELQKARNDLDEETLGRIDFQNQVQTLMEELEFLRRVHEQEVKELQALLAQAPADTREFFKNELALAIRDIKDEYDYIAKQGKQDMESWYKLKVSEVQGSANRANMESSYQREEVKRMRDNIGDLRGKLGDLEAKNALLEKEVQNLNYQLNDDQRQYEAALNDRDATLRRMREECQTLVAELQALLDTKQMLDAEIAIYRKMLEGEESRVGLRQMVEQVVKTHSLQQQEDTDSTRNVRGEVSTKTTFQRSAKGNVTISECDPNGKFITLENTHRSKDENLGEHRLKRKLDNRREIVYTIPPNTVLKAGRTMKIYARDQGGIHNPPDTLVFDGENTWGIGANVVTSLINKDGDERATHTQKTIQTGQ.

Residues 1-84 form a head region; that stretch reads SLKQSQESSE…LEATDKEKKE (84 aa). The 353-residue stretch at 81–433 folds into the IF rod domain; that stretch reads EKKEMQGLND…KMLEGEESRV (353 aa). Residues 85–116 are coil 1A; sequence MQGLNDRLGNYIDRVKKLEEQNRKLVADLDEL. The interval 117–130 is linker 1; that stretch reads RGRWGKDTSEIKIQ. Positions 131–268 are coil 1B; it reads YSDSLRDARK…RVHEQEVKEL (138 aa). Residues 269–285 form a linker 12 region; that stretch reads QALLAQAPADTREFFKN. A coil 2 region spans residues 286 to 433; it reads ELALAIRDIK…KMLEGEESRV (148 aa). Residues 434–589 are tail; sequence GLRQMVEQVV…HTQKTIQTGQ (156 aa). Residues 446-470 form a disordered region; sequence HSLQQQEDTDSTRNVRGEVSTKTTF. Positions 466 to 584 constitute an LTD domain; that stretch reads TKTTFQRSAK…DERATHTQKT (119 aa).

It belongs to the intermediate filament family. In terms of assembly, a and B can form homopolymers. As to expression, giant body muscle cells.

Its subcellular location is the cytoplasm. This chain is Intermediate filament protein B, found in Ascaris suum (Pig roundworm).